Consider the following 1249-residue polypeptide: Apoptotic protease-activating factor 1 (1249 aa).

Positions 1 to 90 (MDAKARNCLL…KDLAALLQSG (90 aa)) constitute a CARD domain. The NB-ARC domain occupies 106–415 (ITSFVRTVLC…LETEEVEDIL (310 aa)). ATP-binding positions include 154–161 (GMAGCGKS) and arginine 265. One copy of the WD 1-1 repeat lies at 613–652 (PHTDAVYHACFSQDGQRIASCGADKTLQVFKAETGEKLLD). The WD 1-2 repeat unit spans residues 655 to 694 (AHEDEVLCCAFSSDDSYIATCSADKKVKIWDSATGKLVHT). The WD 1-3 repeat unit spans residues 697–738 (EHSEQVNCCHFTNKSNHLLLATGSNDFFLKLWDLNQKECRNT). Residues 741-780 (GHTNSVNHCRFSPDDELLASCSADGTLRLWDVRSANERKS) form a WD 1-4 repeat. The WD 1-5 repeat unit spans residues 796 to 837 (DVEVIVKCCSWSADGDKIIVAAKNKVLLFDIHTSGLLAEIHT). Residues 838–877 (GHHSTIQYCDFSPYDHLAVIALSQYCVELWNIDSRLKVAD) form a WD 1-6 repeat. The WD 1-7 repeat unit spans residues 880–910 (GHLSWVHGVMFSPDGSSFLTASDDQTIRVWE). The tract at residues 910 to 921 (ETKKVCKNSAIV) is interpropeller linker. Residues 922 to 958 (LKQEIDVVFQENETMVLAVDNIRGLQLIAGKTGQIDY) form a WD 2-1 repeat. Residues 959 to 998 (LPEAQVSCCCLSPHLEYVAFGDEDGAIKIIELPNNRVFSS) form a WD 2-2 repeat. The stretch at 1001–1040 (GHKKAVRHIQFTADGKTLISSSEDSVIQVWNWQTGDYVFL) is one WD 2-3 repeat. A WD 2-4 repeat occupies 1042-1080 (AHQETVKDFRLLQDSRLLSWSFDGTVKVWNVITGRIERD). The stretch at 1083–1122 (CHQGTVLSCAISSDATKFSSTSADKTAKIWSFDLLSPLHE) is one WD 2-5 repeat. Residues 1125–1164 (GHNGCVRCSAFSLDGILLATGDDNGEIRIWNVSDGQLLHS) form a WD 2-6 repeat. A WD 2-7 repeat occupies 1176–1213 (THGGWVTDVCFSPDSKTLVSAGGYLKWWNVATGDSSQT). A WD 2-8 repeat occupies 1214–1249 (FYTNGTNLKKIHVSPDFRTYVTVDNLGILYILQVLE).

As to quaternary structure, monomer. Oligomerizes to a heptameric ring, known as the apoptosome, upon binding of cytochrome c and dATP. Oligomeric Apaf-1 and pro-caspase-9 bind to each other via their respective NH2-terminal CARD domains and consecutively mature caspase-9 is released from the complex. Interacts with UACA. It may also interact with Bcl-XL. Interacts with APIP. Interacts (via CARD and NACHT domains) with NAIP/BIRC1 (via NACHT domain). Interacts with CIAO2A. Highly expressed in lung and spleen, weakly in brain and kidney and not detectable in liver.

The protein resides in the cytoplasm. Functionally, oligomeric Apaf-1 mediates the cytochrome c-dependent autocatalytic activation of pro-caspase-9 (Apaf-3), leading to the activation of caspase-3 and apoptosis. This activation requires ATP. In Mus musculus (Mouse), this protein is Apoptotic protease-activating factor 1 (Apaf1).